We begin with the raw amino-acid sequence, 263 residues long: Glycerol uptake facilitator protein (263 aa).

The Cytoplasmic segment spans residues 1 to 7; it reads MNIYRKK. Residues 8 to 36 form a helical membrane-spanning segment; sequence NIIKKCFMEFFGTGLVMFFGIGCLAASKL. Topologically, residues 37 to 41 are extracellular; that stretch reads TNANF. The helical transmembrane segment at 42 to 62 threads the bilayer; it reads TQFEISCIWGFGVSIAIYFSS. Topologically, residues 63–65 are cytoplasmic; it reads SIS. The stretch at 66–69 is an intramembrane region; the sequence is GAHL. An NPA 1 motif is present at residues 70–72; sequence NPA. An intramembrane region (helical) is located at residues 70-80; the sequence is NPAVTIFFWLS. Over 81–86 the chain is Cytoplasmic; it reads SKLNKR. The chain crosses the membrane as a helical span at residues 87 to 110; the sequence is KVLPYIISQTLGSFFFTMLTYYLY. At 111–145 the chain is on the extracellular side; the sequence is NNLLISFERNNNVVRGTQESLNLASIFCVYPNYNN. The chain crosses the membrane as a helical span at residues 146–171; that stretch reads SFIYDFIIEIFSTALFILIVLEFNNR. Topologically, residues 172-181 are cytoplasmic; that stretch reads NSNYFLYNRS. A helical transmembrane segment spans residues 182–198; the sequence is VAPILTGFLVCMINLVI. Over 199-202 the chain is Extracellular; sequence NPLN. Residues 203 to 206 lie within the membrane without spanning it; sequence NISL. The NPA 2 signature appears at 207–209; it reads NPA. An intramembrane region (helical) is located at residues 207 to 220; sequence NPARDLGPKILLSL. Topologically, residues 221–236 are extracellular; that stretch reads TGWGLFSFTGGNDNIL. A helical transmembrane segment spans residues 237 to 259; sequence YCFIPIMGPILGANLGGWIHKTL. The Cytoplasmic portion of the chain corresponds to 260–263; the sequence is INNS.

Belongs to the MIP/aquaporin (TC 1.A.8) family.

The protein resides in the cell membrane. It carries out the reaction glycerol(in) = glycerol(out). Mediates glycerol diffusion across the cytoplasmic membrane via a pore-type mechanism. The protein is Glycerol uptake facilitator protein (glpF) of Buchnera aphidicola subsp. Acyrthosiphon pisum (strain APS) (Acyrthosiphon pisum symbiotic bacterium).